The chain runs to 839 residues: MYVHVRVGMDVAAHHHHHQQLRRERHFIQSVSSSNANGTATDPSQDDMAIVHEPQPQPQPQPEPQPQPQPEPEEEAPQKRAKKCTSDVWQHFTKKEIEVEVDGKKYVQVWGHCNFPNCKAKYRAEGHHGTSGFRNHLRTSHSLVKGQLCLKSEKDHGKDINLIEPYKYDEVVSLKKLHLAIIMHEYPFNIVEHEYFVEFVKSLRPHFPIKSRVTARKYIMDLYLEEKEKLYGKLKDVQSRFSTTMDMWTSCQNKSYMCVTIHWIDDDWCLQKRIVGFFHVEGRHTGQRLSQTFTAIMVKWNIEKKLFALSLDNASANEVAVHDIIEDLQDTDSNLVCDGAFFHVRCACHILNLVAKDGLAVIAGTIEKIKAIVLAVKSSPLQWEELMKCASECDLDKSKGISYDVSTRWNSTYLMLRDALYYKPALIRLKTSDPRRYVCLNCCTCHHYKFSINQMSIIVGTMQFVLKPRSGRWHLTLFKCLKKFFDLTELLSGTQYSTANLFYKGFCEIKDLIDQWCCHEKFVIRRMAVAMSEKFEKYWKVSNIALAVACFLDPRYKKILIEFYMKKFHGDSYKVHVDDFVRVIRKLYQFYSSCSPSAPKTKTTTNDSMDDTLMENEDDEFQNYLHELKDYDQVESNELDKYMSEPLLKHSGQFDILSWWRGRVAEYPILTQIARDVLAIQVSTVASESAFSAGGRVVDPYRNRLGSEIVEALICTKDWVAASRKGEWHICYNEVPIYSYSTIILLILMHICVIQGATYFPTMIGDLEVLDSVIAAATNHENHMDEVFKDYYLLRAWAINLLLFTTVLMHGLFLSPCFDACALLPSRVILPAWLALTDF.

Residues 32–43 (SSSNANGTATDP) are compositionally biased toward polar residues. Residues 32 to 85 (SSSNANGTATDPSQDDMAIVHEPQPQPQPQPEPQPQPQPEPEEEAPQKRAKKCT) are disordered. A compositionally biased stretch (pro residues) spans 55–70 (QPQPQPQPEPQPQPQP).

The chain is Putative AC9 transposase from Zea mays (Maize).